A 153-amino-acid chain; its full sequence is Calmodulin-like protein 4 (153 aa).

EF-hand domains follow at residues 8-43 (DAIQKFKECFSLYDKKGKGKIPAGDLLTVMRCLGTC), 44-79 (PTPGEVTRHLQVHKIGKDGEVDFSTFLTIMYRQQKQ), 81-116 (DPENEIMVAMLMSDKQKKGVIPLKELRAKLTQMGEK), and 117-152 (LTPEEVDDLLKGVKVGPDGMVKYEEFVRQITLPVPD).

This sequence belongs to the calmodulin family. Associates with the IMAC/intermicrovillar adhesion complex.

The protein localises to the cell projection. It localises to the microvillus. As part of the intermicrovillar adhesion complex/IMAC plays a role in epithelial brush border differentiation, controlling microvilli organization and length. Acts as a light chain for MYO7B and is required for efficient targeting of the IMAC to the tips of border brush microvilli. The protein is Calmodulin-like protein 4 (calml4) of Xenopus tropicalis (Western clawed frog).